The sequence spans 190 residues: FGFAWPEELECSRLVNCDETAPATAPVTTNAHGTQKTPGQTRRDYGFWCPRHLHTSNGQGYKFLGIDQCAPPCPNMYFKNYELDVAKSFIGIVSIFCLCATLFTFLTFLIDVKRFRYPERPIIYYSVCYSIVSLMYFIGFLLGNRTACNKADDKLEIGETVVLGSQNKACTVLFMVLYFFTMAGTIWWVI.

One can recognise an FZ domain in the interval 1–20 (FGFAWPEELECSRLVNCDET). Residues 1-89 (FGFAWPEELE…NYELDVAKSF (89 aa)) are Extracellular-facing. The chain crosses the membrane as a helical span at residues 90–110 (IGIVSIFCLCATLFTFLTFLI). Over 111–121 (DVKRFRYPERP) the chain is Cytoplasmic. A helical membrane pass occupies residues 122 to 142 (IIYYSVCYSIVSLMYFIGFLL). At 143–169 (GNRTACNKADDKLEIGETVVLGSQNKA) the chain is on the extracellular side. N144 is a glycosylation site (N-linked (GlcNAc...) asparagine). A helical transmembrane segment spans residues 170–190 (CTVLFMVLYFFTMAGTIWWVI).

Belongs to the G-protein coupled receptor Fz/Smo family.

The protein localises to the membrane. It is found in the cell membrane. The protein resides in the cell surface. It localises to the apical cell membrane. Its subcellular location is the cytoplasmic vesicle membrane. Functionally, receptor for Wnt proteins. Most of frizzled receptors are coupled to the beta-catenin canonical signaling pathway, which leads to the activation of disheveled proteins, inhibition of GSK-3 kinase, nuclear accumulation of beta-catenin and activation of Wnt target genes. A second signaling pathway involving PKC and calcium fluxes has been seen for some family members, but it is not yet clear if it represents a distinct pathway or if it can be integrated in the canonical pathway, as PKC seems to be required for Wnt-mediated inactivation of GSK-3 kinase. Both pathways seem to involve interactions with G-proteins. Activation by Wnt5A stimulates PKC activity via a G-protein-dependent mechanism. Involved in transduction and intercellular transmission of polarity information during tissue morphogenesis and/or in differentiated tissues. Together with FZD3, may be involved in the neural tube closure and plays a role in the regulation of the establishment of planar cell polarity (PCP), particularly in the orientation of asymmetric bundles of stereocilia on the apical faces of a subset of auditory and vestibular sensory cells located in the inner ear. The protein is Frizzled-6 (FZD6) of Gallus gallus (Chicken).